Consider the following 515-residue polypeptide: 2-isopropylmalate synthase (515 aa).

In terms of domain architecture, Pyruvate carboxyltransferase spans 4 to 266; the sequence is ISVFDTTLRD…ETGLILKEIK (263 aa). Mn(2+) contacts are provided by aspartate 13, histidine 201, histidine 203, and asparagine 237. The tract at residues 391–515 is regulatory domain; the sequence is ELQTLQVNYG…AEVYGSKVEV (125 aa).

It belongs to the alpha-IPM synthase/homocitrate synthase family. LeuA type 1 subfamily. In terms of assembly, homodimer. It depends on Mn(2+) as a cofactor.

The protein resides in the cytoplasm. It catalyses the reaction 3-methyl-2-oxobutanoate + acetyl-CoA + H2O = (2S)-2-isopropylmalate + CoA + H(+). It functions in the pathway amino-acid biosynthesis; L-leucine biosynthesis; L-leucine from 3-methyl-2-oxobutanoate: step 1/4. Its function is as follows. Catalyzes the condensation of the acetyl group of acetyl-CoA with 3-methyl-2-oxobutanoate (2-ketoisovalerate) to form 3-carboxy-3-hydroxy-4-methylpentanoate (2-isopropylmalate). The protein is 2-isopropylmalate synthase of Halalkalibacterium halodurans (strain ATCC BAA-125 / DSM 18197 / FERM 7344 / JCM 9153 / C-125) (Bacillus halodurans).